The following is a 1081-amino-acid chain: Disheveled-associated activator of morphogenesis 1-A (1081 aa).

The GBD/FH3 domain occupies 45–418 (LPVPPVEELD…QIVIQNEKGQ (374 aa)). Disordered regions lie at residues 455-476 (KEHNELQQKLEKKERECDAKTQ) and 519-615 (RTVC…PLKS). The segment covering 526-536 (PGGPPPPPGAP) has biased composition (pro residues). Over residues 538 to 547 (GPMSMPSGNF) the composition is skewed to low complexity. Over residues 548–585 (MPPPPPPPPPFPGGMAPPPPPPPPPPPPPGGPPPPPGL) the composition is skewed to pro residues. The span at 586 to 600 (PLLGAAPPGAPLGLS) shows a compositional bias: low complexity. One can recognise an FH2 domain in the interval 603 to 1012 (KKNIPQPKNP…EERRIRMEAQ (410 aa)). Residues 696–705 (AQNCNILLSR) are actin-binding. Residues 1013–1029 (LKEQRERERKARKAKEN) show a composition bias toward basic and acidic residues. Disordered stretches follow at residues 1013–1038 (LKEQRERERKARKAKENGEEEGEFDD) and 1060–1081 (RKRIVSQTTESSRERPVTKLNY). Positions 1030–1061 (GEEEGEFDDLVSALRSGEVFDKDLSKLKRNRK) constitute a DAD domain. A compositionally biased stretch (basic and acidic residues) spans 1070-1081 (SSRERPVTKLNY).

The protein localises to the cytoplasm. Its subcellular location is the cytoskeleton. The protein resides in the cilium basal body. Its function is as follows. Binds to disheveled (dsh) and Rho, and mediates Wnt-induced dsh-Rho complex formation during gastrulation. May play a role as a scaffolding protein to recruit Rho-GDP and Rho-GEF, thereby enhancing Rho-GTP formation. Can direct nucleation and elongation of new actin filaments. Involved in building functional cilia. Involved in building functional cilia. Involved in the organization of the subapical actin network in multiciliated epithelial cells. The polypeptide is Disheveled-associated activator of morphogenesis 1-A (daam1-a) (Xenopus laevis (African clawed frog)).